A 235-amino-acid chain; its full sequence is Phosphoribosylformylglycinamidine synthase subunit PurQ (235 aa).

Positions 5-235 constitute a Glutamine amidotransferase type-1 domain; that stretch reads FGVVVFPGSN…LLNHVSIVAA (231 aa). Residue cysteine 88 is the Nucleophile of the active site. Catalysis depends on residues histidine 205 and glutamate 207.

As to quaternary structure, part of the FGAM synthase complex composed of 1 PurL, 1 PurQ and 2 PurS subunits.

It is found in the cytoplasm. The catalysed reaction is N(2)-formyl-N(1)-(5-phospho-beta-D-ribosyl)glycinamide + L-glutamine + ATP + H2O = 2-formamido-N(1)-(5-O-phospho-beta-D-ribosyl)acetamidine + L-glutamate + ADP + phosphate + H(+). The enzyme catalyses L-glutamine + H2O = L-glutamate + NH4(+). It participates in purine metabolism; IMP biosynthesis via de novo pathway; 5-amino-1-(5-phospho-D-ribosyl)imidazole from N(2)-formyl-N(1)-(5-phospho-D-ribosyl)glycinamide: step 1/2. In terms of biological role, part of the phosphoribosylformylglycinamidine synthase complex involved in the purines biosynthetic pathway. Catalyzes the ATP-dependent conversion of formylglycinamide ribonucleotide (FGAR) and glutamine to yield formylglycinamidine ribonucleotide (FGAM) and glutamate. The FGAM synthase complex is composed of three subunits. PurQ produces an ammonia molecule by converting glutamine to glutamate. PurL transfers the ammonia molecule to FGAR to form FGAM in an ATP-dependent manner. PurS interacts with PurQ and PurL and is thought to assist in the transfer of the ammonia molecule from PurQ to PurL. The sequence is that of Phosphoribosylformylglycinamidine synthase subunit PurQ from Salinibacter ruber (strain DSM 13855 / M31).